The sequence spans 270 residues: Acetylglutamate kinase (270 aa).

Substrate contacts are provided by residues 53 to 54 (GG), Arg-75, and Asn-167.

Belongs to the acetylglutamate kinase family. ArgB subfamily.

Its subcellular location is the cytoplasm. It catalyses the reaction N-acetyl-L-glutamate + ATP = N-acetyl-L-glutamyl 5-phosphate + ADP. The protein operates within amino-acid biosynthesis; L-arginine biosynthesis; N(2)-acetyl-L-ornithine from L-glutamate: step 2/4. Functionally, catalyzes the ATP-dependent phosphorylation of N-acetyl-L-glutamate. In Shewanella halifaxensis (strain HAW-EB4), this protein is Acetylglutamate kinase.